An 83-amino-acid polypeptide reads, in one-letter code: Small ribosomal subunit protein uS17 (83 aa).

It belongs to the universal ribosomal protein uS17 family. In terms of assembly, part of the 30S ribosomal subunit.

Its function is as follows. One of the primary rRNA binding proteins, it binds specifically to the 5'-end of 16S ribosomal RNA. This Ehrlichia chaffeensis (strain ATCC CRL-10679 / Arkansas) protein is Small ribosomal subunit protein uS17.